The following is a 221-amino-acid chain: Orotate phosphoribosyltransferase (221 aa).

Lys27 is a binding site for 5-phospho-alpha-D-ribose 1-diphosphate. 35-36 (FF) contacts orotate. Residues 75–76 (YK), Arg102, Lys103, Lys106, His108, and 128–136 (DDVLTAGTA) each bind 5-phospho-alpha-D-ribose 1-diphosphate. The orotate site is built by Thr132 and Arg160.

This sequence belongs to the purine/pyrimidine phosphoribosyltransferase family. PyrE subfamily. Homodimer. Requires Mg(2+) as cofactor.

It catalyses the reaction orotidine 5'-phosphate + diphosphate = orotate + 5-phospho-alpha-D-ribose 1-diphosphate. The protein operates within pyrimidine metabolism; UMP biosynthesis via de novo pathway; UMP from orotate: step 1/2. In terms of biological role, catalyzes the transfer of a ribosyl phosphate group from 5-phosphoribose 1-diphosphate to orotate, leading to the formation of orotidine monophosphate (OMP). In Dichelobacter nodosus (strain VCS1703A), this protein is Orotate phosphoribosyltransferase.